We begin with the raw amino-acid sequence, 507 residues long: Transcription factor CP2 (507 aa).

Positions 61-300 (ENKILPFQYV…SPGFNSSHNS (240 aa)) constitute a Grh/CP2 DB domain. The segment at 133–395 (EHQQLEGWRW…LFNALKGRMV (263 aa)) is DNA-binding. Disordered stretches follow at residues 240-268 (PKGADRKQKTDREKMEKRTPQEKEKYQPS) and 296-316 (SSHNSFPIGEGNGSPNHQPEP). A compositionally biased stretch (basic and acidic residues) spans 241-265 (KGADRKQKTDREKMEKRTPQEKEKY).

The protein belongs to the grh/CP2 family. CP2 subfamily. As to quaternary structure, component of the SSP (stage selector protein) complex, which appears to be a heteromer of TFCP2 and 2 copies of NFE4.

It localises to the nucleus. May function as a transcription factor. This is Transcription factor CP2 (tfcp2) from Xenopus tropicalis (Western clawed frog).